Consider the following 315-residue polypeptide: Ester hydrolase C11orf54 homolog (315 aa).

Zn(2+) contacts are provided by histidine 266, histidine 268, and histidine 278.

As to quaternary structure, monomer. It depends on Zn(2+) as a cofactor.

The protein localises to the nucleus. Its subcellular location is the cytoplasm. Functionally, exhibits ester hydrolase activity on the substrate p-nitrophenyl acetate, in vitro. Regulates DNA damage and repair by regulating HIF1A degradation via chaperone-mediated autophagy (CMA). The chain is Ester hydrolase C11orf54 homolog from Rattus norvegicus (Rat).